Here is a 560-residue protein sequence, read N- to C-terminus: SET domain-containing protein 4 (560 aa).

Disordered stretches follow at residues 1-61 (MTSP…PSPQ) and 125-157 (KKQN…AEDN). A compositionally biased stretch (low complexity) spans 26-38 (SRSSSYSSNSSMS). Polar residues predominate over residues 47-59 (LSVSSAASETLPS). Residues 141-157 (ESSKENKITPSMRAEDN) show a composition bias toward basic and acidic residues. Residues 160–210 (KNGCICGSSDSKDELFIQCNKCKTWQHKLCYAFKKSDPIKRDFVCKRCDSD) form a PHD-type zinc finger. The SET domain maps to 346 to 475 (ADIEVRKSSN…KGEEISVEWQ (130 aa)).

Belongs to the SET3 family.

In terms of biological role, putative chromatin regulator. This chain is SET domain-containing protein 4 (SET4), found in Saccharomyces cerevisiae (strain ATCC 204508 / S288c) (Baker's yeast).